A 358-amino-acid polypeptide reads, in one-letter code: MYVARLSTRPLSNPSTAQLSKAAAFFAQSYALPSTKCTAHVPSRRPFTSGAKIQVKGRDLFPEPXHGQIKRTEPAWPHPPYSVEQMRSKVYFAHRKPRDFSDRVALGMVRFLRWCTDFATGYKHNVEAPKTASDSNAVTATKPYQMSERKWLIRYVFLESVAGVPGMVAGMLRHLRSLRGLKRDNGWIETLLEEAYNERMHLLTFLKMYEPGLFMRTMILGAQGVFFNSFFLCYLFSPKTCHRFVGYLEEEAVLTYTLSIQDLENGHLPKWADPNFKAPDLAIEYWGMPEGHRSMRDLLYYIRADEAKHREVNHTLGNLKQDEDPNPFVSVYGKEVADKPGKGIESLRPLGWEREEVI.

Residues 152 to 172 (LIRYVFLESVAGVPGMVAGML) traverse the membrane as a helical segment. 3 residues coordinate Fe cation: E159, E198, and H201. Residues 218-238 (MILGAQGVFFNSFFLCYLFSP) form a helical membrane-spanning segment. Fe cation contacts are provided by E249, E306, and H309.

It belongs to the alternative oxidase family. The cofactor is Fe cation.

The protein localises to the mitochondrion inner membrane. Functionally, catalyzes cyanide-resistant oxygen consumption. May increase respiration when the cytochrome respiratory pathway is restricted, or in response to low temperatures. This chain is Alternative oxidase, mitochondrial (AOX1), found in Monilinia fructicola (Brown rot fungus).